A 229-amino-acid polypeptide reads, in one-letter code: Putative N-acetylmannosamine-6-phosphate 2-epimerase (229 aa).

Belongs to the NanE family.

It catalyses the reaction an N-acyl-D-glucosamine 6-phosphate = an N-acyl-D-mannosamine 6-phosphate. It functions in the pathway amino-sugar metabolism; N-acetylneuraminate degradation; D-fructose 6-phosphate from N-acetylneuraminate: step 3/5. Converts N-acetylmannosamine-6-phosphate (ManNAc-6-P) to N-acetylglucosamine-6-phosphate (GlcNAc-6-P). The sequence is that of Putative N-acetylmannosamine-6-phosphate 2-epimerase from Escherichia coli O7:K1 (strain IAI39 / ExPEC).